Consider the following 512-residue polypeptide: Solute carrier family 40 member 2 (512 aa).

The disordered stretch occupies residues 1-28 (MEEETETRVFLSNEQHQEEEEEEEEEPS). The span at 17 to 27 (QEEEEEEEEEP) shows a compositional bias: acidic residues. 11 helical membrane passes run 55–75 (VALY…MYGV), 105–125 (LVTQ…LLVV), 133–153 (FPVF…GVLS), 187–207 (GIDL…ISFV), 214–234 (ITFA…FISV), 310–330 (IVLP…FGTL), 343–363 (YIIG…TVLY), 376–396 (GVWS…SIWV), 405–425 (MLMA…LAVI), 442–462 (GVQN…GIIV), and 468–488 (FWML…LYTI).

This sequence belongs to the ferroportin (FP) (TC 2.A.100) family. SLC40A subfamily.

Its subcellular location is the vacuole membrane. Its function is as follows. Vacuolar transporter that is involved in the transport of excess nickel into the vacuole under iron deficiency, increasing cellular tolerance to nickel under iron deficiency stress response. This chain is Solute carrier family 40 member 2 (IREG2), found in Arabidopsis thaliana (Mouse-ear cress).